A 432-amino-acid chain; its full sequence is Ornithine decarboxylase, chloroplastic (432 aa).

Position 95 is an N6-(pyridoxal phosphate)lysine (Lys95). Residues Ser227, Gly265, and 298–301 (EPGR) each bind pyridoxal 5'-phosphate. 341–342 (YD) contacts substrate. The active-site Proton donor; shared with dimeric partner is the Cys377. Position 378 (Asp378) interacts with substrate. Residue Tyr406 coordinates pyridoxal 5'-phosphate.

This sequence belongs to the Orn/Lys/Arg decarboxylase class-II family. In terms of assembly, homodimer. Only the dimer is catalytically active, as the active sites are constructed of residues from both monomers. Requires pyridoxal 5'-phosphate as cofactor.

The protein localises to the plastid. Its subcellular location is the chloroplast. It carries out the reaction L-lysine + H(+) = cadaverine + CO2. It catalyses the reaction L-ornithine + H(+) = putrescine + CO2. The protein operates within alkaloid biosynthesis; nicotine biosynthesis. It participates in amine and polyamine biosynthesis; putrescine biosynthesis via L-ornithine pathway; putrescine from L-ornithine: step 1/1. With respect to regulation, repressed by alpha-difluoromethylornithine (DFMO), 5,5'-dithiobis-(2-nitrobenzoic acid) (DTNB) and salicylaldehyde. Involved in the biosynthesis of pyridine alkaloid natural products, leading mainly to the production of anabasine, anatabine, nicotine and nornicotine, effective deterrents against herbivores with antiparasitic and pesticide properties (neurotoxins); nornicotine serves as the precursor in the synthesis of the carcinogen compound N'-nitrosonornicotine (NNN). Catalyzes the first and rate-limiting step of polyamine biosynthesis that converts ornithine into putrescine, which is the precursor for the polyamines, spermidine and spermine. Can also use, with a lower efficiency, L-lysine as substrate to produce cadaverine. Polyamines are essential for cell proliferation and are implicated in cellular processes, ranging from DNA replication to apoptosis. The sequence is that of Ornithine decarboxylase, chloroplastic from Nicotiana glutinosa (Tobacco).